A 289-amino-acid chain; its full sequence is Signal peptidase I (289 aa).

Over 1 to 43 the chain is Cytoplasmic; that stretch reads MKKLTSTTTTLWDNKLFINNLKNFMQTNTESNNNKTTAQEWKS. The chain crosses the membrane as a helical span at residues 44 to 64; it reads FILVVVIALMIRILIIESFVV. The Periplasmic segment spans residues 65–289; sequence PTGSMKATIL…IFRNLYSIED (225 aa). Catalysis depends on residues serine 68 and lysine 131.

It belongs to the peptidase S26 family.

It is found in the cell inner membrane. The enzyme catalyses Cleavage of hydrophobic, N-terminal signal or leader sequences from secreted and periplasmic proteins.. The polypeptide is Signal peptidase I (lepB) (Rickettsia bellii (strain OSU 85-389)).